The following is a 186-amino-acid chain: Catechol O-methyltransferase (186 aa).

S-adenosyl-L-methionine contacts are provided by residues Val7, Glu29, Ser37, Glu55, Leu56, 82-85 (GASQ), Ser84, and Asp106. Asp106 contributes to the Mg(2+) binding site. Substrate is bound at residue Lys109. Residues Asp134 and Asn135 each coordinate Mg(2+). Substrate-binding residues include Asn135 and Glu164. At Ser182 the chain carries Phosphoserine.

It belongs to the class I-like SAM-binding methyltransferase superfamily. Cation-dependent O-methyltransferase family. Requires Mg(2+) as cofactor.

Its subcellular location is the cytoplasm. The protein localises to the cell membrane. The enzyme catalyses a catechol + S-adenosyl-L-methionine = a guaiacol + S-adenosyl-L-homocysteine + H(+). It carries out the reaction 2-hydroxyestrone + S-adenosyl-L-methionine = 2-hydroxy-3-methoxy-estrone + S-adenosyl-L-homocysteine + H(+). The catalysed reaction is 4-hydroxyestrone + S-adenosyl-L-methionine = 4-methoxyestrone + S-adenosyl-L-homocysteine + H(+). It catalyses the reaction 2-hydroxyestrone + S-adenosyl-L-methionine = 2-methoxyestrone + S-adenosyl-L-homocysteine + H(+). The enzyme catalyses 4-hydroxy-17beta-estradiol + S-adenosyl-L-methionine = 4-methoxy-17beta-estradiol + S-adenosyl-L-homocysteine + H(+). It carries out the reaction 2-hydroxy-17beta-estradiol + S-adenosyl-L-methionine = 2-hydroxy-3-methoxy-17beta-estradiol + S-adenosyl-L-homocysteine + H(+). The catalysed reaction is 2-hydroxy-17beta-estradiol + S-adenosyl-L-methionine = 2-methoxy-17beta-estradiol + S-adenosyl-L-homocysteine + H(+). Catalyzes the O-methylation, and thereby the inactivation, of catecholamine neurotransmitters and catechol hormones. Also shortens the biological half-lives of certain neuroactive drugs, like L-DOPA, alpha-methyl DOPA and isoproterenol. The sequence is that of Catechol O-methyltransferase (COMT) from Sus scrofa (Pig).